Consider the following 171-residue polypeptide: GTP-dependent dephospho-CoA kinase (171 aa).

GTP-binding residues include Asp-49, Val-51, Asp-68, and Glu-122.

Belongs to the GTP-dependent DPCK family.

The enzyme catalyses 3'-dephospho-CoA + GTP = GDP + CoA + H(+). Its pathway is cofactor biosynthesis; coenzyme A biosynthesis. In terms of biological role, catalyzes the GTP-dependent phosphorylation of the 3'-hydroxyl group of dephosphocoenzyme A to form coenzyme A (CoA). The protein is GTP-dependent dephospho-CoA kinase of Hyperthermus butylicus (strain DSM 5456 / JCM 9403 / PLM1-5).